Reading from the N-terminus, the 550-residue chain is Chaperonin GroEL (550 aa).

ATP is bound by residues 30–33, Lys-51, 87–91, Gly-415, 479–481, and Asp-495; these read TLGP, DGTTT, and NAA.

The protein belongs to the chaperonin (HSP60) family. Forms a cylinder of 14 subunits composed of two heptameric rings stacked back-to-back. Interacts with the co-chaperonin GroES.

It is found in the cytoplasm. It carries out the reaction ATP + H2O + a folded polypeptide = ADP + phosphate + an unfolded polypeptide.. In terms of biological role, together with its co-chaperonin GroES, plays an essential role in assisting protein folding. The GroEL-GroES system forms a nano-cage that allows encapsulation of the non-native substrate proteins and provides a physical environment optimized to promote and accelerate protein folding. The chain is Chaperonin GroEL from Polynucleobacter asymbioticus (strain DSM 18221 / CIP 109841 / QLW-P1DMWA-1) (Polynucleobacter necessarius subsp. asymbioticus).